The chain runs to 160 residues: Crossover junction endodeoxyribonuclease RuvC (160 aa).

Catalysis depends on residues aspartate 9, glutamate 68, and aspartate 141. Aspartate 9, glutamate 68, and aspartate 141 together coordinate Mg(2+).

It belongs to the RuvC family. In terms of assembly, homodimer which binds Holliday junction (HJ) DNA. The HJ becomes 2-fold symmetrical on binding to RuvC with unstacked arms; it has a different conformation from HJ DNA in complex with RuvA. In the full resolvosome a probable DNA-RuvA(4)-RuvB(12)-RuvC(2) complex forms which resolves the HJ. Mg(2+) serves as cofactor.

Its subcellular location is the cytoplasm. It carries out the reaction Endonucleolytic cleavage at a junction such as a reciprocal single-stranded crossover between two homologous DNA duplexes (Holliday junction).. In terms of biological role, the RuvA-RuvB-RuvC complex processes Holliday junction (HJ) DNA during genetic recombination and DNA repair. Endonuclease that resolves HJ intermediates. Cleaves cruciform DNA by making single-stranded nicks across the HJ at symmetrical positions within the homologous arms, yielding a 5'-phosphate and a 3'-hydroxyl group; requires a central core of homology in the junction. The consensus cleavage sequence is 5'-(A/T)TT(C/G)-3'. Cleavage occurs on the 3'-side of the TT dinucleotide at the point of strand exchange. HJ branch migration catalyzed by RuvA-RuvB allows RuvC to scan DNA until it finds its consensus sequence, where it cleaves and resolves the cruciform DNA. This is Crossover junction endodeoxyribonuclease RuvC from Campylobacter jejuni (strain RM1221).